We begin with the raw amino-acid sequence, 183 residues long: Guanylate kinase (183 aa).

The Guanylate kinase-like domain maps to 4-182 (GRVVVLTGPS…AITALEAAIF (179 aa)). Position 11 to 18 (11 to 18 (GPSGVGKG)) interacts with ATP.

Belongs to the guanylate kinase family.

Its subcellular location is the cytoplasm. It carries out the reaction GMP + ATP = GDP + ADP. The catalysed reaction is dZMP + ATP = dZDP + ADP. It participates in purine metabolism. Functionally, essential for recycling GMP and indirectly, cGMP. Its function is as follows. (Microbial infection) Catalyzes the phosphorylation of dZMP to dZDP, when the bacterium is infected by a phage that produces the substrate for the synthesis of dZTP (2- amino-2'-deoxyadenosine 5'-triphosphate), which is then used by the phage as a DNA polymerase substrate. The chain is Guanylate kinase from Synechococcus sp. (strain ATCC 27144 / PCC 6301 / SAUG 1402/1) (Anacystis nidulans).